A 742-amino-acid chain; its full sequence is Phosphoribosylformylglycinamidine synthase subunit PurL (742 aa).

His54 is a catalytic residue. Tyr57 and Lys96 together coordinate ATP. A Mg(2+)-binding site is contributed by Glu98. Residues 99 to 102 and Arg121 each bind substrate; that span reads SHNH. His100 (proton acceptor) is an active-site residue. Asp122 lines the Mg(2+) pocket. Gln245 is a binding site for substrate. Asp273 lines the Mg(2+) pocket. 317–319 provides a ligand contact to substrate; that stretch reads ESQ. ATP-binding residues include Asp500 and Gly537. Asn538 contributes to the Mg(2+) binding site. Substrate is bound at residue Ser540.

The protein belongs to the FGAMS family. As to quaternary structure, monomer. Part of the FGAM synthase complex composed of 1 PurL, 1 PurQ and 2 PurS subunits.

The protein resides in the cytoplasm. The enzyme catalyses N(2)-formyl-N(1)-(5-phospho-beta-D-ribosyl)glycinamide + L-glutamine + ATP + H2O = 2-formamido-N(1)-(5-O-phospho-beta-D-ribosyl)acetamidine + L-glutamate + ADP + phosphate + H(+). The protein operates within purine metabolism; IMP biosynthesis via de novo pathway; 5-amino-1-(5-phospho-D-ribosyl)imidazole from N(2)-formyl-N(1)-(5-phospho-D-ribosyl)glycinamide: step 1/2. Its function is as follows. Part of the phosphoribosylformylglycinamidine synthase complex involved in the purines biosynthetic pathway. Catalyzes the ATP-dependent conversion of formylglycinamide ribonucleotide (FGAR) and glutamine to yield formylglycinamidine ribonucleotide (FGAM) and glutamate. The FGAM synthase complex is composed of three subunits. PurQ produces an ammonia molecule by converting glutamine to glutamate. PurL transfers the ammonia molecule to FGAR to form FGAM in an ATP-dependent manner. PurS interacts with PurQ and PurL and is thought to assist in the transfer of the ammonia molecule from PurQ to PurL. The chain is Phosphoribosylformylglycinamidine synthase subunit PurL from Oceanobacillus iheyensis (strain DSM 14371 / CIP 107618 / JCM 11309 / KCTC 3954 / HTE831).